Here is a 671-residue protein sequence, read N- to C-terminus: NADH-quinone oxidoreductase subunit G (671 aa).

The 2Fe-2S ferredoxin-type domain occupies 1 to 78; it reads MIKLNIDGSE…GMVIHTDTPM (78 aa). 4 residues coordinate [2Fe-2S] cluster: C34, C45, C48, and C62. In terms of domain architecture, 4Fe-4S His(Cys)3-ligated-type spans 78-117; that stretch reads MVKKAREGVMEFLLINHPLDCPICDQGGECDLQDQAFRYG. The [4Fe-4S] cluster site is built by H94, C98, C101, C107, C146, C149, C152, and C196. Residues 215 to 271 form the 4Fe-4S Mo/W bis-MGD-type domain; that stretch reads LKHTASIGVHDAEGSNIRIDSRGDEVMRILPRVNEEINEEWLSDKNRFSYDGLKYQR.

The protein belongs to the complex I 75 kDa subunit family. The cofactor is [2Fe-2S] cluster. [4Fe-4S] cluster serves as cofactor.

The enzyme catalyses a quinone + NADH + 5 H(+)(in) = a quinol + NAD(+) + 4 H(+)(out). In terms of biological role, NDH-1 shuttles electrons from NADH, via FMN and iron-sulfur (Fe-S) centers, to quinones in the respiratory chain. Couples the redox reaction to proton translocation (for every two electrons transferred, four hydrogen ions are translocated across the cytoplasmic membrane), and thus conserves the redox energy in a proton gradient. This chain is NADH-quinone oxidoreductase subunit G (nuoG), found in Rickettsia felis (strain ATCC VR-1525 / URRWXCal2) (Rickettsia azadi).